The following is a 149-amino-acid chain: Large ribosomal subunit protein uL16c (149 aa).

It belongs to the universal ribosomal protein uL16 family. As to quaternary structure, part of the 50S ribosomal subunit.

The protein localises to the plastid. The protein resides in the organellar chromatophore. In Paulinella chromatophora, this protein is Large ribosomal subunit protein uL16c (rpl16).